The primary structure comprises 78 residues: ATP synthase subunit c (78 aa).

2 helical membrane passes run 11–31 (FIGA…VGHV) and 53–73 (LFVG…IALL).

This sequence belongs to the ATPase C chain family. F-type ATPases have 2 components, F(1) - the catalytic core - and F(0) - the membrane proton channel. F(1) has five subunits: alpha(3), beta(3), gamma(1), delta(1), epsilon(1). F(0) has four main subunits: a(1), b(1), b'(1) and c(10-14). The alpha and beta chains form an alternating ring which encloses part of the gamma chain. F(1) is attached to F(0) by a central stalk formed by the gamma and epsilon chains, while a peripheral stalk is formed by the delta, b and b' chains.

Its subcellular location is the cell inner membrane. In terms of biological role, f(1)F(0) ATP synthase produces ATP from ADP in the presence of a proton or sodium gradient. F-type ATPases consist of two structural domains, F(1) containing the extramembraneous catalytic core and F(0) containing the membrane proton channel, linked together by a central stalk and a peripheral stalk. During catalysis, ATP synthesis in the catalytic domain of F(1) is coupled via a rotary mechanism of the central stalk subunits to proton translocation. Key component of the F(0) channel; it plays a direct role in translocation across the membrane. A homomeric c-ring of between 10-14 subunits forms the central stalk rotor element with the F(1) delta and epsilon subunits. This chain is ATP synthase subunit c, found in Cereibacter sphaeroides (strain ATCC 17025 / ATH 2.4.3) (Rhodobacter sphaeroides).